A 446-amino-acid chain; its full sequence is WEB family protein At3g56270 (446 aa).

The stretch at 313–349 (TNVSRIEILRKLEEANEEVKQSKQALEVALNRVEIAS) forms a coiled coil.

It belongs to the WEB family.

This Arabidopsis thaliana (Mouse-ear cress) protein is WEB family protein At3g56270.